The chain runs to 129 residues: Small ribosomal subunit protein uS11 (129 aa).

Belongs to the universal ribosomal protein uS11 family. As to quaternary structure, part of the 30S ribosomal subunit. Interacts with proteins S7 and S18. Binds to IF-3.

Functionally, located on the platform of the 30S subunit, it bridges several disparate RNA helices of the 16S rRNA. Forms part of the Shine-Dalgarno cleft in the 70S ribosome. The polypeptide is Small ribosomal subunit protein uS11 (Methylobacterium sp. (strain 4-46)).